The primary structure comprises 939 residues: Valine--tRNA ligase (939 aa).

The 'HIGH' region motif lies at 47-57 (PNVTGILHMGH). The short motif at 563–567 (KLSKS) is the 'KMSKS' region element. K566 provides a ligand contact to ATP. Residues 873–939 (AEHLAKEHAR…QSILDKIASL (67 aa)) adopt a coiled-coil conformation.

It belongs to the class-I aminoacyl-tRNA synthetase family. ValS type 1 subfamily. As to quaternary structure, monomer.

Its subcellular location is the cytoplasm. The enzyme catalyses tRNA(Val) + L-valine + ATP = L-valyl-tRNA(Val) + AMP + diphosphate. Functionally, catalyzes the attachment of valine to tRNA(Val). As ValRS can inadvertently accommodate and process structurally similar amino acids such as threonine, to avoid such errors, it has a 'posttransfer' editing activity that hydrolyzes mischarged Thr-tRNA(Val) in a tRNA-dependent manner. The polypeptide is Valine--tRNA ligase (Chlamydia muridarum (strain MoPn / Nigg)).